We begin with the raw amino-acid sequence, 511 residues long: Vesicular acetylcholine transporter (511 aa).

The Cytoplasmic segment spans residues 1 to 36 (MAVGQAKAAMGKISSAIGERSKRISGAMNEPRRKRK). A helical transmembrane segment spans residues 37-57 (ILLVIVCIAMLLDNMLYMVIV). The Lumenal, vesicle portion of the chain corresponds to 58–108 (PIIPNYLETIRTYKLVYITTPSNGTNGSLLNSTQRAVLERNPNANEDIQIG). N-linked (GlcNAc...) asparagine glycans are attached at residues Asn-80, Asn-83, and Asn-88. A helical transmembrane segment spans residues 109 to 129 (VLFASKAILQLLSNPFTGTFI). The Cytoplasmic portion of the chain corresponds to 130–135 (DRVGYD). A helical membrane pass occupies residues 136–156 (IPLLIGLTIMFFSTITFAFGE). The Lumenal, vesicle portion of the chain corresponds to 157–165 (SYAILFAAR). A helical transmembrane segment spans residues 166 to 186 (SLQGLGSAFADTSGIAMIADK). Over 187 to 197 (YTEESERTQAL) the chain is Cytoplasmic. A helical membrane pass occupies residues 198 to 218 (GIALAFISFGSLVAPPFGGVL). Over 219–225 (YQFAGKW) the chain is Lumenal, vesicle. The helical transmembrane segment at 226 to 246 (VPFLVLSFVCLLDGILLLMVV) threads the bilayer. The Cytoplasmic portion of the chain corresponds to 247-267 (TPFASRTRVNTLQGTPIYKLM). A helical transmembrane segment spans residues 268-288 (IDPYIAVVAGALTTCNIPLAF). Residues 289–306 (LEPTISNWMKKTMNASEW) are Lumenal, vesicle-facing. The N-linked (GlcNAc...) asparagine glycan is linked to Asn-302. The helical transmembrane segment at 307–327 (QMGITWLPAFFPHILGVYITV) threads the bilayer. Over 328 to 337 (KLAAKYPNYQ) the chain is Cytoplasmic. The chain crosses the membrane as a helical span at residues 338–358 (WLYGAVGLVIIGASSCTIPAC). At 359 to 363 (RNFEE) the chain is on the lumenal, vesicle side. Residues 364-384 (LIIPLCALCFGIALVDTALLP) form a helical membrane-spanning segment. Topologically, residues 385–400 (TLAFLVDIRYVSVYGS) are cytoplasmic. A helical transmembrane segment spans residues 401 to 421 (VYAIADISYSVAYALGPIMAG). At 422-428 (QIVHDLG) the chain is on the lumenal, vesicle side. The chain crosses the membrane as a helical span at residues 429 to 449 (FVQLNLGMGLVNILYAPGLLF). Topologically, residues 450-511 (LRNVCQMKPS…VLSDQEGYSE (62 aa)) are cytoplasmic. The interval 485-511 (EAKEPHGTSSGNHSVHAVLSDQEGYSE) is disordered.

It belongs to the major facilitator superfamily. Vesicular transporter family. In terms of tissue distribution, high expression in the electric lobe of the brain.

Its subcellular location is the membrane. Functionally, involved in acetylcholine transport into synaptic vesicles. In Torpedo marmorata (Marbled electric ray), this protein is Vesicular acetylcholine transporter.